Consider the following 386-residue polypeptide: 3-hydroxyisobutyryl-CoA hydrolase, mitochondrial (386 aa).

The N-terminal 32 residues, 1–32, are a transit peptide targeting the mitochondrion; it reads MGLQGLCRLMSRFNSYKRTNIILQHLKMSNHT. Position 92 is an N6-acetyllysine; alternate (Lys-92). Residue Lys-92 is modified to N6-succinyllysine; alternate. Residues Glu-121, Gly-146, Glu-169, and Asp-177 each coordinate substrate. Lys-221 carries the N6-acetyllysine; alternate modification. Residue Lys-221 is modified to N6-succinyllysine; alternate. Position 234 is a phosphoserine (Ser-234). N6-succinyllysine is present on residues Lys-250 and Lys-257. The residue at position 297 (Lys-297) is an N6-acetyllysine; alternate. An N6-succinyllysine; alternate modification is found at Lys-297. Lys-301 bears the N6-succinyllysine mark. Residue Lys-353 is modified to N6-acetyllysine; alternate. Residue Lys-353 is modified to N6-succinyllysine; alternate. Ser-356 bears the Phosphoserine mark. Residues Lys-360 and Lys-365 each carry the N6-acetyllysine modification. At Lys-377 the chain carries N6-succinyllysine.

It belongs to the enoyl-CoA hydratase/isomerase family.

The protein resides in the mitochondrion. It carries out the reaction 3-hydroxy-2-methylpropanoyl-CoA + H2O = 3-hydroxy-2-methylpropanoate + CoA + H(+). The protein operates within amino-acid degradation; L-valine degradation. Hydrolyzes 3-hydroxyisobutyryl-CoA (HIBYL-CoA), a saline catabolite. Has high activity toward isobutyryl-CoA. Could be an isobutyryl-CoA dehydrogenase that functions in valine catabolism. Also hydrolyzes 3-hydroxypropanoyl-CoA. The sequence is that of 3-hydroxyisobutyryl-CoA hydrolase, mitochondrial (HIBCH) from Bos taurus (Bovine).